Reading from the N-terminus, the 261-residue chain is Indole-3-glycerol phosphate synthase (261 aa).

The protein belongs to the TrpC family.

The catalysed reaction is 1-(2-carboxyphenylamino)-1-deoxy-D-ribulose 5-phosphate + H(+) = (1S,2R)-1-C-(indol-3-yl)glycerol 3-phosphate + CO2 + H2O. The protein operates within amino-acid biosynthesis; L-tryptophan biosynthesis; L-tryptophan from chorismate: step 4/5. In Burkholderia vietnamiensis (strain G4 / LMG 22486) (Burkholderia cepacia (strain R1808)), this protein is Indole-3-glycerol phosphate synthase.